Reading from the N-terminus, the 428-residue chain is Kynureninase (428 aa).

Pyridoxal 5'-phosphate is bound by residues Thr104, Thr105, 132-135 (FPSD), Asp213, His216, and Tyr238. N6-(pyridoxal phosphate)lysine is present on Lys239. Pyridoxal 5'-phosphate-binding residues include Trp267 and Thr295.

This sequence belongs to the kynureninase family. In terms of assembly, homodimer. Requires pyridoxal 5'-phosphate as cofactor.

It carries out the reaction L-kynurenine + H2O = anthranilate + L-alanine + H(+). It catalyses the reaction 3-hydroxy-L-kynurenine + H2O = 3-hydroxyanthranilate + L-alanine + H(+). It participates in amino-acid degradation; L-kynurenine degradation; L-alanine and anthranilate from L-kynurenine: step 1/1. It functions in the pathway cofactor biosynthesis; NAD(+) biosynthesis; quinolinate from L-kynurenine: step 2/3. Its function is as follows. Catalyzes the cleavage of L-kynurenine (L-Kyn) and L-3-hydroxykynurenine (L-3OHKyn) into anthranilic acid (AA) and 3-hydroxyanthranilic acid (3-OHAA), respectively. This Bacillus cereus (strain ZK / E33L) protein is Kynureninase.